We begin with the raw amino-acid sequence, 278 residues long: Tryptophan synthase alpha chain (278 aa).

Residues glutamate 50 and aspartate 61 each act as proton acceptor in the active site.

Belongs to the TrpA family. In terms of assembly, tetramer of two alpha and two beta chains.

It catalyses the reaction (1S,2R)-1-C-(indol-3-yl)glycerol 3-phosphate + L-serine = D-glyceraldehyde 3-phosphate + L-tryptophan + H2O. It participates in amino-acid biosynthesis; L-tryptophan biosynthesis; L-tryptophan from chorismate: step 5/5. Its function is as follows. The alpha subunit is responsible for the aldol cleavage of indoleglycerol phosphate to indole and glyceraldehyde 3-phosphate. The chain is Tryptophan synthase alpha chain from Rhodopseudomonas palustris (strain BisA53).